We begin with the raw amino-acid sequence, 669 residues long: MPTDNDPILVTCGLPYANGPAHIGHLRTYVPADIFVRALRRMGHDVLFICGSDAHGTPIVVNAESRGMSPRELVEFYHKHFEDVFRSINVRFDYFGCTDDPSNHHRTQEIVRALMERGHVYPKEIELAYCPRCERFLPDRYVEGICPYCGVPARGDECDQGCGRHLEPGEIKDAVCKVCGTRAEYRKQTHYFFRLSAFREFLLDYLQRLGGTASARNYALEWVRQELKDWCITRNMSWGVKFPGSEDLVVYVWVDAPIGYISFTEEWCKAHGVPWERYWRGKSRIIHFIGGDIVYHHCIFWPAMLEGAGYTLPSDVVASGMLKIDDKKFSKSRGYVVWVKDDYLDQGLEPDYLRYYLASYTSHTKEVNFSWKILQEKVNTELVGAFGNFLNRAVTFAVKNFDGKVPEGELDPEVMKRIEMSVGDVSSSLMEYEFKRASDAVLSLADYANTYFQSHEPWKLIRSDRRAAGSVLRNCLQMVKAMIILMEPFMPSRMAVAWKQLGMESLDDIQFRDAVQPIPEGHPLGTPKILFSRIEDSTVKRLEEIFRERVRRAEGAGEKVKEKPVIPFDQFKALDLRVGTVLEAERIKGSDKLLRLIVDIGEKRQIVAGIAKMYKPEELVGRQVVVVANLEPVKIFGVESRGMLLAADINGDAVLLKPDKEVPAGCGIR.

The 'HIGH' region motif lies at 15–25 (PYANGPAHIGH). Positions 146, 149, 158, and 162 each coordinate Zn(2+). The short motif at 328-332 (KFSKS) is the 'KMSKS' region element. K331 provides a ligand contact to ATP. The 100-residue stretch at 570-669 (QFKALDLRVG…KEVPAGCGIR (100 aa)) folds into the tRNA-binding domain.

It belongs to the class-I aminoacyl-tRNA synthetase family. MetG type 1 subfamily. As to quaternary structure, homodimer. Zn(2+) is required as a cofactor.

It is found in the cytoplasm. It carries out the reaction tRNA(Met) + L-methionine + ATP = L-methionyl-tRNA(Met) + AMP + diphosphate. Functionally, is required not only for elongation of protein synthesis but also for the initiation of all mRNA translation through initiator tRNA(fMet) aminoacylation. In Methanothrix thermoacetophila (strain DSM 6194 / JCM 14653 / NBRC 101360 / PT) (Methanosaeta thermophila), this protein is Methionine--tRNA ligase.